The primary structure comprises 564 residues: MRLSEFHLHTTKEIPADAELVSHRLMLRAGMIRKLASGLYTWSPLGLRVLRKVEAIVRDEMNRAGAVEMLLPTIQPRELWEESERWEKFGNQLLKIKDRKQAEYCYSPTAEEAVTDYVRQELTSYKQLPVNLYQIQTKFRDEIRPRFGVMRAREFVMKDAYSFHLNDADLVREYENMRATYTRIFTRLGLEFRAVQADSGAIGGDASQEFHVIADSGEDVLAFSTGSDYAANIEAAIAATPGPRLTANETLQKVSTPTQKRCEDVAALLDIPLQRVVKSIAVMTDSGFFLALLRGDHTLNDIKLSKLPGLANFRLANEVEIARHLGSEPGFLGPVCPGMPIRIIADCEVAVMADFVVGANEVGFHLVGVNWGRDLPEPEVVADIRNVIEGDRAVDGGKICIARGIEVGHVFQLGRKYAEAMKATVLDEYGKAVTMTMGCYGIGVSRIVAAAIEQNHDVAGIIWPASIAPWQVAVCVINPKKDPVITAAAEVLLAELQSADVDTVLDDRGLRPGVMFADMELIGIPHRIVVSERGLAAGTYEYRARHTAMVENLDKTTLLMRIKA.

It belongs to the class-II aminoacyl-tRNA synthetase family. ProS type 1 subfamily. As to quaternary structure, homodimer.

It is found in the cytoplasm. It carries out the reaction tRNA(Pro) + L-proline + ATP = L-prolyl-tRNA(Pro) + AMP + diphosphate. Its function is as follows. Catalyzes the attachment of proline to tRNA(Pro) in a two-step reaction: proline is first activated by ATP to form Pro-AMP and then transferred to the acceptor end of tRNA(Pro). As ProRS can inadvertently accommodate and process non-cognate amino acids such as alanine and cysteine, to avoid such errors it has two additional distinct editing activities against alanine. One activity is designated as 'pretransfer' editing and involves the tRNA(Pro)-independent hydrolysis of activated Ala-AMP. The other activity is designated 'posttransfer' editing and involves deacylation of mischarged Ala-tRNA(Pro). The misacylated Cys-tRNA(Pro) is not edited by ProRS. This is Proline--tRNA ligase from Xylella fastidiosa (strain 9a5c).